A 225-amino-acid polypeptide reads, in one-letter code: Phosphoribosylformylglycinamidine synthase subunit PurQ (225 aa).

Residues arginine 5–glycine 225 enclose the Glutamine amidotransferase type-1 domain. The active-site Nucleophile is the cysteine 89. Active-site residues include histidine 198 and glutamate 200.

As to quaternary structure, part of the FGAM synthase complex composed of 1 PurL, 1 PurQ and 2 PurS subunits.

The protein localises to the cytoplasm. It carries out the reaction N(2)-formyl-N(1)-(5-phospho-beta-D-ribosyl)glycinamide + L-glutamine + ATP + H2O = 2-formamido-N(1)-(5-O-phospho-beta-D-ribosyl)acetamidine + L-glutamate + ADP + phosphate + H(+). The enzyme catalyses L-glutamine + H2O = L-glutamate + NH4(+). It functions in the pathway purine metabolism; IMP biosynthesis via de novo pathway; 5-amino-1-(5-phospho-D-ribosyl)imidazole from N(2)-formyl-N(1)-(5-phospho-D-ribosyl)glycinamide: step 1/2. Part of the phosphoribosylformylglycinamidine synthase complex involved in the purines biosynthetic pathway. Catalyzes the ATP-dependent conversion of formylglycinamide ribonucleotide (FGAR) and glutamine to yield formylglycinamidine ribonucleotide (FGAM) and glutamate. The FGAM synthase complex is composed of three subunits. PurQ produces an ammonia molecule by converting glutamine to glutamate. PurL transfers the ammonia molecule to FGAR to form FGAM in an ATP-dependent manner. PurS interacts with PurQ and PurL and is thought to assist in the transfer of the ammonia molecule from PurQ to PurL. The protein is Phosphoribosylformylglycinamidine synthase subunit PurQ of Synechococcus sp. (strain JA-3-3Ab) (Cyanobacteria bacterium Yellowstone A-Prime).